Consider the following 304-residue polypeptide: UDP-N-acetylenolpyruvoylglucosamine reductase (304 aa).

The region spanning Arg31–Gly196 is the FAD-binding PCMH-type domain. Arg176 is a catalytic residue. Ser225 (proton donor) is an active-site residue. Glu295 is an active-site residue.

Belongs to the MurB family. FAD serves as cofactor.

It is found in the cytoplasm. The catalysed reaction is UDP-N-acetyl-alpha-D-muramate + NADP(+) = UDP-N-acetyl-3-O-(1-carboxyvinyl)-alpha-D-glucosamine + NADPH + H(+). It participates in cell wall biogenesis; peptidoglycan biosynthesis. In terms of biological role, cell wall formation. The polypeptide is UDP-N-acetylenolpyruvoylglucosamine reductase (Methylococcus capsulatus (strain ATCC 33009 / NCIMB 11132 / Bath)).